Here is a 425-residue protein sequence, read N- to C-terminus: Synaptotagmin-4 (425 aa).

The Vesicular portion of the chain corresponds to 1–16 (MAPITTSREEFDEIPT). Residues 17–37 (VVGIFSAFGLVFTVSLFAWIC) form a helical membrane-spanning segment. Topologically, residues 38–425 (CQRKSSKSNK…IAKWHVLCDG (388 aa)) are cytoplasmic. A compositionally biased stretch (basic and acidic residues) spans 73–83 (FGADDKNEVKN). Disordered stretches follow at residues 73–93 (FGADDKNEVKNKPAVPKNSLH) and 127–147 (LEGEKESVSPESLKSSTSLTS). The residue at position 135 (serine 135) is a Phosphoserine; by MAPK8. The segment covering 135 to 146 (SPESLKSSTSLT) has biased composition (low complexity). 2 C2 domains span residues 153–274 (KLGT…MLMN) and 287–420 (GRGE…AKWH). Residues aspartate 246, serine 249, and aspartate 252 each contribute to the Ca(2+) site.

The protein belongs to the synaptotagmin family. Interacts with KIF1A; the interaction increases in presence of calcium and decreases when SYT4 is phosphorylated at Ser-135. Requires Ca(2+) as cofactor. In terms of processing, phosphorylation at Ser-135 by MAPK8/JNK1 reduces interaction with KIF1A and neuronal dense core vesicles mobility. In terms of tissue distribution, expressed in melanocytes. Expressed in brain. Within brain, expression is highest in hippocampus, with substantial levels also detected in amygdala and thalamus.

The protein resides in the cytoplasmic vesicle. It is found in the secretory vesicle. The protein localises to the neuronal dense core vesicle membrane. In terms of biological role, synaptotagmin family member which does not bind Ca(2+). Involved in neuronal dense core vesicles (DCVs) mobility through its interaction with KIF1A. Upon increased neuronal activity, phosphorylation by MAPK8/JNK1 destabilizes the interaction with KIF1A and captures DCVs to synapses. Plays a role in dendrite formation by melanocytes. This chain is Synaptotagmin-4 (SYT4), found in Homo sapiens (Human).